Reading from the N-terminus, the 65-residue chain is Small ribosomal subunit protein eS31 (65 aa).

The Zn(2+) site is built by C36, C39, C55, and C58. Residues 36–58 (CPKCGSVMAFHREPVPRWHCGKC) form a C4-type zinc finger.

Belongs to the eukaryotic ribosomal protein eS31 family. Part of the 30S ribosomal subunit. The cofactor is Zn(2+).

In Pyrobaculum calidifontis (strain DSM 21063 / JCM 11548 / VA1), this protein is Small ribosomal subunit protein eS31.